Reading from the N-terminus, the 313-residue chain is Methionyl-tRNA formyltransferase (313 aa).

113 to 116 (SLLP) lines the (6S)-5,6,7,8-tetrahydrofolate pocket.

Belongs to the Fmt family.

It catalyses the reaction L-methionyl-tRNA(fMet) + (6R)-10-formyltetrahydrofolate = N-formyl-L-methionyl-tRNA(fMet) + (6S)-5,6,7,8-tetrahydrofolate + H(+). In terms of biological role, attaches a formyl group to the free amino group of methionyl-tRNA(fMet). The formyl group appears to play a dual role in the initiator identity of N-formylmethionyl-tRNA by promoting its recognition by IF2 and preventing the misappropriation of this tRNA by the elongation apparatus. The chain is Methionyl-tRNA formyltransferase from Francisella tularensis subsp. novicida (strain U112).